We begin with the raw amino-acid sequence, 266 residues long: UPF0294 protein YafD (266 aa).

It belongs to the UPF0294 family.

The protein resides in the cytoplasm. This chain is UPF0294 protein YafD, found in Shigella dysenteriae serotype 1 (strain Sd197).